Reading from the N-terminus, the 99-residue chain is uncharacterized protein (99 aa).

A helical transmembrane segment spans residues 10 to 29 (ELSVHTGTVTHTIFVYVFLG).

It is found in the membrane. This is an uncharacterized protein from Schizosaccharomyces pombe (strain 972 / ATCC 24843) (Fission yeast).